The primary structure comprises 312 residues: Malate dehydrogenase (312 aa).

NAD(+) contacts are provided by residues 12–17 (GAGFTG) and D36. The substrate site is built by R87 and R93. NAD(+) is bound by residues N100 and 123–125 (LTN). N125 lines the substrate pocket. S149 carries the phosphoserine modification. R156 contacts substrate. The Proton acceptor role is filled by H180.

It belongs to the LDH/MDH superfamily. MDH type 3 family.

It catalyses the reaction (S)-malate + NAD(+) = oxaloacetate + NADH + H(+). Its function is as follows. Catalyzes the reversible oxidation of malate to oxaloacetate. In Bacillus pumilus (strain SAFR-032), this protein is Malate dehydrogenase.